The primary structure comprises 407 residues: Proteasome-activating nucleotidase (407 aa).

Residues 22-67 are a coiled coil; the sequence is KEKTQIAELESKVLRLELKNKDVTRENVQIKKENEILKRELDKLRI. Residues 192 to 197 and His-331 each bind ATP; that span reads GTGKTL. Positions 405–407 are docks into pockets in the proteasome alpha-ring to cause gate opening; that stretch reads MYG.

Belongs to the AAA ATPase family. As to quaternary structure, homohexamer. The hexameric complex has a two-ring architecture resembling a top hat that caps the 20S proteasome core at one or both ends. Upon ATP-binding, the C-terminus of PAN interacts with the alpha-rings of the proteasome core by binding to the intersubunit pockets.

The protein localises to the cytoplasm. Its function is as follows. ATPase which is responsible for recognizing, binding, unfolding and translocation of substrate proteins into the archaeal 20S proteasome core particle. Is essential for opening the gate of the 20S proteasome via an interaction with its C-terminus, thereby allowing substrate entry and access to the site of proteolysis. Thus, the C-termini of the proteasomal ATPase function like a 'key in a lock' to induce gate opening and therefore regulate proteolysis. Unfolding activity requires energy from ATP hydrolysis, whereas ATP binding alone promotes ATPase-20S proteasome association which triggers gate opening, and supports translocation of unfolded substrates. This is Proteasome-activating nucleotidase from Methanococcus maripaludis (strain C7 / ATCC BAA-1331).